The chain runs to 499 residues: Taxadiene 5-alpha hydroxylase (499 aa).

A helical; Signal-anchor membrane pass occupies residues 22–42; the sequence is TESFSIALSAIAGILLLLLLF. C445 contacts heme.

Belongs to the cytochrome P450 family. It depends on heme as a cofactor.

Its subcellular location is the membrane. It carries out the reaction taxa-4(5),11(12)-diene + reduced [NADPH--hemoprotein reductase] + O2 = taxa-4(20),11-dien-5alpha-ol + oxidized [NADPH--hemoprotein reductase] + H2O + H(+). It functions in the pathway alkaloid biosynthesis; taxol biosynthesis; taxa-4(20),11-dien-5alpha-ol from geranylgeranyl diphosphate: step 2/2. In terms of biological role, catalyzes the first oxygenation step of taxol biosynthesis. Can use both taxa-4(5),11(12)-diene and taxa-4(20),11(12)-diene as substrate. The polypeptide is Taxadiene 5-alpha hydroxylase (Taxus cuspidata (Japanese yew)).